Reading from the N-terminus, the 139-residue chain is Ribosome-binding factor A (139 aa).

The segment at 112–139 (EARTQGQAAPAPDVEPAPGAAPDDEAEE) is disordered. The span at 119 to 132 (AAPAPDVEPAPGAA) shows a compositional bias: low complexity.

Belongs to the RbfA family. As to quaternary structure, monomer. Binds 30S ribosomal subunits, but not 50S ribosomal subunits or 70S ribosomes.

Its subcellular location is the cytoplasm. Functionally, one of several proteins that assist in the late maturation steps of the functional core of the 30S ribosomal subunit. Associates with free 30S ribosomal subunits (but not with 30S subunits that are part of 70S ribosomes or polysomes). Required for efficient processing of 16S rRNA. May interact with the 5'-terminal helix region of 16S rRNA. The sequence is that of Ribosome-binding factor A from Anaeromyxobacter dehalogenans (strain 2CP-1 / ATCC BAA-258).